A 367-amino-acid polypeptide reads, in one-letter code: Holliday junction branch migration complex subunit RuvB (367 aa).

The tract at residues 2–196 (TDEPLTDRPP…FGFTARLDFY (195 aa)) is large ATPase domain (RuvB-L). ATP-binding positions include L35, R36, G77, K80, T81, T82, 143–145 (EDF), R186, Y196, and R233. Mg(2+) is bound at residue T81. A small ATPAse domain (RuvB-S) region spans residues 197-267 (EPADLERIVH…VAQAALAVYE (71 aa)). Positions 270 to 367 (EHGLDRLDRA…IDRDAGEPTA (98 aa)) are head domain (RuvB-H). 2 residues coordinate DNA: R325 and R330.

It belongs to the RuvB family. In terms of assembly, homohexamer. Forms an RuvA(8)-RuvB(12)-Holliday junction (HJ) complex. HJ DNA is sandwiched between 2 RuvA tetramers; dsDNA enters through RuvA and exits via RuvB. An RuvB hexamer assembles on each DNA strand where it exits the tetramer. Each RuvB hexamer is contacted by two RuvA subunits (via domain III) on 2 adjacent RuvB subunits; this complex drives branch migration. In the full resolvosome a probable DNA-RuvA(4)-RuvB(12)-RuvC(2) complex forms which resolves the HJ.

The protein resides in the cytoplasm. The catalysed reaction is ATP + H2O = ADP + phosphate + H(+). In terms of biological role, the RuvA-RuvB-RuvC complex processes Holliday junction (HJ) DNA during genetic recombination and DNA repair, while the RuvA-RuvB complex plays an important role in the rescue of blocked DNA replication forks via replication fork reversal (RFR). RuvA specifically binds to HJ cruciform DNA, conferring on it an open structure. The RuvB hexamer acts as an ATP-dependent pump, pulling dsDNA into and through the RuvAB complex. RuvB forms 2 homohexamers on either side of HJ DNA bound by 1 or 2 RuvA tetramers; 4 subunits per hexamer contact DNA at a time. Coordinated motions by a converter formed by DNA-disengaged RuvB subunits stimulates ATP hydrolysis and nucleotide exchange. Immobilization of the converter enables RuvB to convert the ATP-contained energy into a lever motion, pulling 2 nucleotides of DNA out of the RuvA tetramer per ATP hydrolyzed, thus driving DNA branch migration. The RuvB motors rotate together with the DNA substrate, which together with the progressing nucleotide cycle form the mechanistic basis for DNA recombination by continuous HJ branch migration. Branch migration allows RuvC to scan DNA until it finds its consensus sequence, where it cleaves and resolves cruciform DNA. The protein is Holliday junction branch migration complex subunit RuvB of Acidothermus cellulolyticus (strain ATCC 43068 / DSM 8971 / 11B).